A 1313-amino-acid polypeptide reads, in one-letter code: Inactive protein tyrosine kinase pTKL (1313 aa).

MORN repeat units follow at residues 20 to 42 (YAGD…ENGN) and 45 to 63 (FGHF…IDKN). N-linked (GlcNAc...) asparagine glycosylation is found at N63, N131, N178, N208, N254, N260, and N288. The 66-residue stretch at 300 to 365 (WNKEQVAQWL…LQLIKNLRVT (66 aa)) folds into the SAM domain. N466, N516, N525, N528, and N534 each carry an N-linked (GlcNAc...) asparagine glycan. Over residues 569–580 (EPIKPNKEKEEN) the composition is skewed to basic and acidic residues. Positions 569 to 631 (EPIKPNKEKE…SEKSSETSSE (63 aa)) are disordered. Over residues 586 to 604 (PIINSKNETNLLNDSNPTK) the composition is skewed to polar residues. Residues N592, N598, N661, N678, N729, N735, and N749 are each glycosylated (N-linked (GlcNAc...) asparagine). K782 serves as a coordination point for ATP. N790, N868, N940, N983, and N1000 each carry an N-linked (GlcNAc...) asparagine glycan. Residues 962-1294 (FRNKNNILCG…FDRILIEISM (333 aa)) enclose the Protein kinase domain. An RVxF motif motif is present at residues 1052 to 1055 (KILF). N1191 and N1198 each carry an N-linked (GlcNAc...) asparagine glycan.

This sequence belongs to the protein kinase superfamily. TKL Ser/Thr protein kinase family.

The protein localises to the parasitophorous vacuole. It is found in the host cell membrane. Its subcellular location is the host cytoplasm. The protein resides in the host cytoskeleton. The chain is Inactive protein tyrosine kinase pTKL from Plasmodium berghei (strain Anka).